Here is a 637-residue protein sequence, read N- to C-terminus: Interleukin-17 receptor E (637 aa).

An N-terminal signal peptide occupies residues 1–24 (MGSPRLAALLLSQPLLFICLAVSA). Residues 25-415 (QVACPCLPRW…LCPDVSHRHL (391 aa)) lie on the Extracellular side of the membrane. Residues asparagine 278 and asparagine 307 are each glycosylated (N-linked (GlcNAc...) asparagine). A helical membrane pass occupies residues 416–436 (GLLILALLGLTTLLGVVLVLF). Topologically, residues 437 to 637 (CRRLLPGPGR…TNSPCGFSCL (201 aa)) are cytoplasmic. The SEFIR domain maps to 447–583 (TRPVLLLHAA…LLRDLPRLLR (137 aa)).

Forms heterodimers with IL17RE; the heterodimer binds IL17C.

It localises to the cell membrane. Specific functional receptor for IL17C, signaling through the NF-kappa-B and MAPK pathways. Requires TRAF3IP2 /ACT1 for signaling. Crucial regulator in innate immunity to bacterial pathogens. In Rattus norvegicus (Rat), this protein is Interleukin-17 receptor E (Il17re).